The following is a 377-amino-acid chain: Nitric oxide reductase FlRd-NAD(+) reductase (377 aa).

The protein belongs to the FAD-dependent oxidoreductase family. FAD serves as cofactor.

The protein localises to the cytoplasm. It carries out the reaction 2 reduced [nitric oxide reductase rubredoxin domain] + NAD(+) + H(+) = 2 oxidized [nitric oxide reductase rubredoxin domain] + NADH. Its pathway is nitrogen metabolism; nitric oxide reduction. Functionally, one of at least two accessory proteins for anaerobic nitric oxide (NO) reductase. Reduces the rubredoxin moiety of NO reductase. In Shigella flexneri serotype 5b (strain 8401), this protein is Nitric oxide reductase FlRd-NAD(+) reductase.